We begin with the raw amino-acid sequence, 444 residues long: F-box protein At1g53790 (444 aa).

The F-box domain maps to 76–125 (VSCFRYIPIDLLMDIFSRVPAKSIARFRCVSKLWESILCRPDFKELFMTM).

This Arabidopsis thaliana (Mouse-ear cress) protein is F-box protein At1g53790.